Here is a 136-residue protein sequence, read N- to C-terminus: DNA-directed RNA polymerase subunit omega (136 aa).

The protein belongs to the RNA polymerase subunit omega family. As to quaternary structure, the RNAP catalytic core consists of 2 alpha, 1 beta, 1 beta' and 1 omega subunit. When a sigma factor is associated with the core the holoenzyme is formed, which can initiate transcription.

The enzyme catalyses RNA(n) + a ribonucleoside 5'-triphosphate = RNA(n+1) + diphosphate. Its function is as follows. Promotes RNA polymerase assembly. Latches the N- and C-terminal regions of the beta' subunit thereby facilitating its interaction with the beta and alpha subunits. The protein is DNA-directed RNA polymerase subunit omega of Acidiphilium cryptum (strain JF-5).